A 77-amino-acid polypeptide reads, in one-letter code: Small ribosomal subunit protein bS20 (77 aa).

Belongs to the bacterial ribosomal protein bS20 family.

Functionally, binds directly to 16S ribosomal RNA. In Lactococcus lactis subsp. lactis (strain IL1403) (Streptococcus lactis), this protein is Small ribosomal subunit protein bS20.